The following is a 362-amino-acid chain: MKNLFLFCRSGYEKDCAAEIQQRATELNVGGFVKTNINDAYVIYQCFDDNGADTLVKELALSSLVFARQMFAAGELLSDLPEQDRVGPIVASLAALSKCGELRVETPDTNEAKELSAFCRKLTVPLRQGLKKSGALLNAESDRRPIIHVCFIGPGKAYAGYSLSHNSSPHFMGIPRLRMAADAPSRSSLKLDEAFGAFLTKEEQETRCRSGLNAVDLGACPGGWTYQLVRRGMMVAAVDNGPMDPKLMETGQVKHYRADGFRFEPPRKNVYWLVCDMVEKPARVAELMEAWAINGWFKEAIFNLKLPMKSRYKEVSVILETIGAILTENEIDFKMQCKHLYHDRDEVTVHLWIFPEKGVSYA.

Residues serine 187, 220-223 (CPGG), aspartate 239, aspartate 259, and aspartate 276 contribute to the S-adenosyl-L-methionine site. Residue lysine 305 is the Proton acceptor of the active site.

The protein belongs to the class I-like SAM-binding methyltransferase superfamily. RNA methyltransferase RlmE family. RlmM subfamily. Monomer.

It localises to the cytoplasm. The catalysed reaction is cytidine(2498) in 23S rRNA + S-adenosyl-L-methionine = 2'-O-methylcytidine(2498) in 23S rRNA + S-adenosyl-L-homocysteine + H(+). Functionally, catalyzes the 2'-O-methylation at nucleotide C2498 in 23S rRNA. This chain is Ribosomal RNA large subunit methyltransferase M, found in Shewanella frigidimarina (strain NCIMB 400).